Consider the following 310-residue polypeptide: Probable deoxyhypusine synthase (310 aa).

Lys280 functions as the Nucleophile in the catalytic mechanism.

This sequence belongs to the deoxyhypusine synthase family. It depends on NAD(+) as a cofactor.

The enzyme catalyses [eIF5A protein]-L-lysine + spermidine = [eIF5A protein]-deoxyhypusine + propane-1,3-diamine. Its pathway is protein modification; eIF5A hypusination. Catalyzes the NAD-dependent oxidative cleavage of spermidine and the subsequent transfer of the butylamine moiety of spermidine to the epsilon-amino group of a specific lysine residue of the eIF-5A precursor protein to form the intermediate deoxyhypusine residue. In Aeropyrum pernix (strain ATCC 700893 / DSM 11879 / JCM 9820 / NBRC 100138 / K1), this protein is Probable deoxyhypusine synthase (dys).